The primary structure comprises 93 residues: NADH-ubiquinone oxidoreductase chain 4L (93 aa).

3 helical membrane passes run 1 to 21, 29 to 49, and 54 to 74; these read MVWM…VIFR, LFVG…VFLM, and LILL…ALLV.

Belongs to the complex I subunit 4L family.

Its subcellular location is the mitochondrion membrane. The catalysed reaction is a ubiquinone + NADH + 5 H(+)(in) = a ubiquinol + NAD(+) + 4 H(+)(out). In terms of biological role, core subunit of the mitochondrial membrane respiratory chain NADH dehydrogenase (Complex I) that is believed to belong to the minimal assembly required for catalysis. Complex I functions in the transfer of electrons from NADH to the respiratory chain. The immediate electron acceptor for the enzyme is believed to be ubiquinone. The polypeptide is NADH-ubiquinone oxidoreductase chain 4L (ND4L) (Mytilus edulis (Blue mussel)).